Here is a 450-residue protein sequence, read N- to C-terminus: Biotin carboxylase 1 (450 aa).

One can recognise a Biotin carboxylation domain in the interval 1-447 (MIKKLLIANR…NTKFLETYDV (447 aa)). Residues lysine 116, lysine 158, 164 to 165 (GG), 200 to 203 (EKYI), and histidine 208 contribute to the ATP site. The ATP-grasp domain maps to 120–318 (RETMKQAGVP…LIKEQIKVAS (199 aa)). Lysine 237 contributes to the hydrogencarbonate binding site. The ATP site is built by glutamate 275 and glutamate 289. Positions 275, 289, and 291 each coordinate Mg(2+). Mn(2+) is bound by residues glutamate 275, glutamate 289, and asparagine 291. 3 residues coordinate hydrogencarbonate: arginine 293, valine 296, and arginine 339. Arginine 293 is a catalytic residue. Arginine 339 lines the biotin pocket.

In terms of assembly, acetyl-CoA carboxylase is a heterohexamer of biotin carboxyl carrier protein, biotin carboxylase and the two subunits of carboxyl transferase in a 2:2 complex. Mg(2+) is required as a cofactor. Requires Mn(2+) as cofactor.

The enzyme catalyses N(6)-biotinyl-L-lysyl-[protein] + hydrogencarbonate + ATP = N(6)-carboxybiotinyl-L-lysyl-[protein] + ADP + phosphate + H(+). It functions in the pathway lipid metabolism; malonyl-CoA biosynthesis; malonyl-CoA from acetyl-CoA: step 1/1. Functionally, this protein is a component of the acetyl coenzyme A carboxylase complex; first, biotin carboxylase catalyzes the carboxylation of the carrier protein and then the transcarboxylase transfers the carboxyl group to form malonyl-CoA. The sequence is that of Biotin carboxylase 1 (accC1) from Bacillus subtilis (strain 168).